We begin with the raw amino-acid sequence, 488 residues long: Erythromycin resistance ATP-binding protein MsrA (488 aa).

The ABC transporter 1 domain maps to 6–199 (IKFNQINHKL…NQYEQEQLEQ (194 aa)). 38–45 (GGNGTGKT) serves as a coordination point for ATP. Residues 200–298 (QRKYEQYISE…KIYDIHNNYP (99 aa)) form a Q-linker, rich in Glu and hydrophilic AA region. Residues 211–255 (QRLSQASKAKRNQAQQMAQASSKQKNKSIAPDRLSASKEKGTVEK) form a disordered region. A compositionally biased stretch (low complexity) spans 222–233 (NQAQQMAQASSK). Over residues 245–255 (SASKEKGTVEK) the composition is skewed to basic and acidic residues. Positions 299-487 (IIAQNLTLVK…ELTGQSIHDI (189 aa)) constitute an ABC transporter 2 domain. 331-338 (GANGVGKT) contributes to the ATP binding site.

This sequence belongs to the ABC transporter superfamily.

In terms of biological role, confers resistance to 14-membered ring macrolides (like erythromycin) and to B streptogramins, by acting as an ATP-dependent efflux pump. The polypeptide is Erythromycin resistance ATP-binding protein MsrA (msrA) (Staphylococcus epidermidis).